The sequence spans 519 residues: Exodeoxyribonuclease 7 large subunit (519 aa).

Residues 500–519 are disordered; the sequence is VGRGKTRKPKEEPPAQGSLL.

It belongs to the XseA family. In terms of assembly, heterooligomer composed of large and small subunits.

The protein resides in the cytoplasm. It catalyses the reaction Exonucleolytic cleavage in either 5'- to 3'- or 3'- to 5'-direction to yield nucleoside 5'-phosphates.. Functionally, bidirectionally degrades single-stranded DNA into large acid-insoluble oligonucleotides, which are then degraded further into small acid-soluble oligonucleotides. This chain is Exodeoxyribonuclease 7 large subunit, found in Cereibacter sphaeroides (strain ATCC 17029 / ATH 2.4.9) (Rhodobacter sphaeroides).